Reading from the N-terminus, the 225-residue chain is uncharacterized protein (225 aa).

The next 4 helical transmembrane spans lie at 40 to 60 (LISL…LSIV), 63 to 83 (LAFF…PFSF), 151 to 171 (LSET…LTIL), and 176 to 196 (IFSL…IVSL).

It localises to the membrane. This is an uncharacterized protein from Saccharomyces cerevisiae (strain ATCC 204508 / S288c) (Baker's yeast).